We begin with the raw amino-acid sequence, 1430 residues long: Caskin-1 (1430 aa).

ANK repeat units lie at residues 48 to 77 (DGFS…AVDI), 81 to 110 (KGMR…AVNV), 114 to 143 (EGHI…NPCI), 147 to 176 (SGKT…CAAL), 188 to 217 (NGTS…DINR), and 220 to 249 (KSGT…NAQV). The residue at position 253 (Y253) is a Phosphotyrosine. The 67-residue stretch at 281–347 (SAALQVRATK…PSSLGEAIVK (67 aa)) folds into the SH3 domain. Positions 348–372 (RAGSRTGSEPSPPQGGGSLGPSAPP) are disordered. Phosphoserine is present on S358. The tract at residues 375–471 (IWVLRKPFAG…PKKLESSSAS (97 aa)) is CASK-binding. R398 is subject to Omega-N-methylarginine. Residues 421–430 (QKSVSESSPG) show a composition bias toward polar residues. The disordered stretch occupies residues 421–472 (QKSVSESSPGDSPVKPPEGSSGAARSQPPAAHAGQVYGEQPPKKLESSSASE). Phosphoserine occurs at positions 423 and 432. SAM domains lie at 474-537 (KSAE…LNIP) and 543-607 (HKPA…LAEL). 2 positions are modified to phosphoserine: S635 and S648. A compositionally biased stretch (low complexity) spans 667 to 679 (LSGPAEAGAAAAE). Disordered stretches follow at residues 667 to 1001 (LSGP…SAGS), 1015 to 1040 (GGGG…DPGR), 1055 to 1371 (GPDG…RQKL), and 1388 to 1407 (KIRQ…EKST). Positions 683 to 711 (NHLPATPRTTSRQESSLSGRARHMSSSQE) are enriched in polar residues. S722 and S727 each carry phosphoserine. T740 carries the post-translational modification Phosphothreonine. At S790 the chain carries Phosphoserine. Pro residues predominate over residues 847 to 859 (PPAPGPVPPPVPA). 3 positions are modified to phosphoserine: S890, S892, and S988. Residues 1027–1036 (GHPTPRPASP) show a composition bias toward pro residues. Position 1066 is a phosphothreonine (T1066). S1068 carries the phosphoserine modification. The segment covering 1147 to 1159 (DTVKRRPKAKEPD) has biased composition (basic and acidic residues). Pro residues predominate over residues 1190-1214 (PELPPPPPPAEPPPTDLMPLPPLPL). S1258 is modified (phosphoserine). T1267 carries the phosphothreonine modification. Residues 1267–1282 (TPPPVSPKPPPPPTAP) are compositionally biased toward pro residues. Composition is skewed to low complexity over residues 1283–1298 (KPAK…SATP), 1308–1326 (PPAA…SASP), and 1344–1358 (PRAA…PVAS). S1362 carries the phosphoserine modification. Positions 1388 to 1406 (KIRQEDGQGPRPSSIEEKS) are enriched in basic and acidic residues.

In terms of assembly, polymerizes, via the tandem SAM domains, to form long, 8 nM wide fibers, upon which other proteins can assemble. Binds the CaM kinase domain of CASK. Forms a ternary complex with CASK and LIN7A, LIN7B or LIN7C. Competes with APBA1 that forms a similar complex with CASK and LIN7 proteins. The tripartite complex CASKIN1/CASK/LIN7(A/B/C) binds the cytoplasmic tail of NRXN1. Expressed in brain. Localized primarily to the neuropil and enriched in synaptic areas (at protein level).

It localises to the cytoplasm. In terms of biological role, may link the scaffolding protein CASK to downstream intracellular effectors. This is Caskin-1 (Caskin1) from Rattus norvegicus (Rat).